The chain runs to 865 residues: MITTKELRNKFINYFESKNHSHQPSSSLIPFGDDTLLFTNAGMVQFKDVFLGIEKKDFSRAVTVQKCLRAGGKHNDLDNVGYTARHHTFFEMLGNFSFGDYFKKEAISFAWEFLTKEIKLPVEKLWVTIYASDDEAFDVWHKHIGLAKERIIRIDSSDNFWSMGDTGPCGPCTEIFYDHGEDVAGGLPGTPEQDGDRYIEIWNIVFMQYNRHADGSTTDLPKPSVDTGMGLERISAVLQNVHSNYEIDLFQALIKKAQQVTHAKDINSPSLKVIADHIRACAFLIADGVLPANEGRGYVLRRIIRRAIRHGNKVGAKEIFFYKLVAELVSQMGEVYSQLIDKRELIEKTLIKEEELFLKTIENGIKIFDAEIENLKDNTISGEVAFKLYDTYGFPFDLTADMAREKGLKVDEQAFLAQMQIQKQRSKEAGKFNVDYNSLINSQVKSEFRGYSTLIEDAKVLEIYQDGQLVASTSEQVSAVVVLDKTPFYAESGGQVGDKGILEGIGFEFVVEDVQKSGEAILHIGKLVKGHLNLNDELTARVSDKPRLATAANHSATHLLHKALKLVLGGHAEQKGSLVDENRLRFDFTHDKAISRSKIEQIELLVNQQIRANYPVTTIETSQQKAKSLGAEALFGEKYGDIVRVISMGDFSIELCGGTHVAYTGDIGLFKVTSEGSIASGVRRIEAVTADKAIRHTFTNENKIIAIKDSLKANDTNLIDKIKSMLEQIKNQEKQIAKLKKELLSGSSNDIKETNIGDIKVVVANVDGVDVKTLRNKIDDYKSKNTKVIAVLTTTNADKVQFVIGVSNALTTLIKAGDIAKELSSHIDGKGGGRADMAQGGGNNSANIDQALSQVEKFILNNIKE.

Residues H554, H558, C656, and H660 each contribute to the Zn(2+) site.

This sequence belongs to the class-II aminoacyl-tRNA synthetase family. It depends on Zn(2+) as a cofactor.

Its subcellular location is the cytoplasm. It carries out the reaction tRNA(Ala) + L-alanine + ATP = L-alanyl-tRNA(Ala) + AMP + diphosphate. Its function is as follows. Catalyzes the attachment of alanine to tRNA(Ala) in a two-step reaction: alanine is first activated by ATP to form Ala-AMP and then transferred to the acceptor end of tRNA(Ala). Also edits incorrectly charged Ser-tRNA(Ala) and Gly-tRNA(Ala) via its editing domain. In Francisella tularensis subsp. tularensis (strain FSC 198), this protein is Alanine--tRNA ligase.